The following is a 122-amino-acid chain: Large ribosomal subunit protein uL14 (122 aa).

It belongs to the universal ribosomal protein uL14 family. Part of the 50S ribosomal subunit. Forms a cluster with proteins L3 and L19. In the 70S ribosome, L14 and L19 interact and together make contacts with the 16S rRNA in bridges B5 and B8.

In terms of biological role, binds to 23S rRNA. Forms part of two intersubunit bridges in the 70S ribosome. In Orientia tsutsugamushi (strain Ikeda) (Rickettsia tsutsugamushi), this protein is Large ribosomal subunit protein uL14.